The following is a 132-amino-acid chain: Small ribosomal subunit protein uS8 (132 aa).

It belongs to the universal ribosomal protein uS8 family. Part of the 30S ribosomal subunit. Contacts proteins S5 and S12.

In terms of biological role, one of the primary rRNA binding proteins, it binds directly to 16S rRNA central domain where it helps coordinate assembly of the platform of the 30S subunit. The chain is Small ribosomal subunit protein uS8 from Caulobacter sp. (strain K31).